Consider the following 62-residue polypeptide: Protein UL148D (62 aa).

Residues 30 to 50 form a helical membrane-spanning segment; it reads WWISVAIVIFIGVCLVALMYF.

It is found in the host membrane. This is Protein UL148D (UL148D) from Human cytomegalovirus (strain Merlin) (HHV-5).